Reading from the N-terminus, the 1077-residue chain is Mitogen-activated protein kinase kinase kinase 9 (1077 aa).

The interval 1–40 (MESSRSLLGCLASATAAPPGDDATGAGAEEEEDEEEAAAE) is disordered. A compositionally biased stretch (low complexity) spans 14-27 (ATAAPPGDDATGAG). Over residues 28 to 38 (AEEEEDEEEAA) the composition is skewed to acidic residues. An SH3 domain is found at 45-109 (AALPYWTAVF…PSNYVTPRSA (65 aa)). Residues 137-405 (LTLEEIIGIG…LTTIEESGFF (269 aa)) form the Protein kinase domain. Residues 143 to 151 (IGIGGFGKV) and lysine 164 each bind ATP. Residue aspartate 261 is the Proton acceptor of the active site. A phosphothreonine; by autocatalysis mark is found at threonine 297 and threonine 298. Serine 301 carries the post-translational modification Phosphoserine; by autocatalysis. Threonine 305 is subject to Phosphothreonine; by autocatalysis. 2 leucine-zipper regions span residues 423–444 (IQEMFDQLRAKEKELRTWEEEL) and 458–479 (LRRREQELAEREIDILERELNI). The span at 491–503 (VKKRKGKFRKSRL) shows a compositional bias: basic residues. 6 disordered regions span residues 491–511 (VKKRKGKFRKSRLKLKDGNRI), 526–606 (SPTM…TSGD), 646–713 (EDED…KRGG), 748–790 (LPPE…KKEE), 860–971 (RDPN…PRPS), and 986–1011 (SHARSASPANSSSTETPSNLDSCFAS). Serine 526 bears the Phosphoserine mark. 2 stretches are compositionally biased toward polar residues: residues 559–568 (PGESSKTWGR) and 693–709 (PVNSATSTPQLTPTNSL). A compositionally biased stretch (basic and acidic residues) spans 755 to 767 (PPAREEKKRREGL). Residues 863-880 (NQSLTPTHVTLTAPTQPS) are compositionally biased toward polar residues. Over residues 901–915 (GSRSPSSNGMSPSPG) the composition is skewed to low complexity. Over residues 987-1011 (HARSASPANSSSTETPSNLDSCFAS) the composition is skewed to polar residues.

Belongs to the protein kinase superfamily. STE Ser/Thr protein kinase family. MAP kinase kinase kinase subfamily. As to quaternary structure, homodimer. Mg(2+) serves as cofactor. Autophosphorylation on serine and threonine residues within the activation loop plays a role in enzyme activation. Thr-305 is likely to be the main autophosphorylation site. Autophosphorylation also occurs on Thr-297 and Ser-301. Expressed in cochlea and utricle.

The enzyme catalyses L-seryl-[protein] + ATP = O-phospho-L-seryl-[protein] + ADP + H(+). It carries out the reaction L-threonyl-[protein] + ATP = O-phospho-L-threonyl-[protein] + ADP + H(+). Homodimerization via the leucine zipper domains is required for autophosphorylation of multiple sites in the activation loop and subsequent activation. Autophosphorylation at Thr-305 is the key step in activation of MAP3K9/MLK1 and is required for full phosphorylation. Autophosphorylation at Thr-297 and Ser-301 have been shown to be of secondary importance in the activation of MAP3K9/MLK1. Functionally, serine/threonine kinase which acts as an essential component of the MAP kinase signal transduction pathway. Plays an important role in the cascades of cellular responses evoked by changes in the environment. Once activated, acts as an upstream activator of the MKK/JNK signal transduction cascade through the phosphorylation of MAP2K4/MKK4 and MAP2K7/MKK7 which in turn activate the JNKs. The MKK/JNK signaling pathway regulates stress response via activator protein-1 (JUN) and GATA4 transcription factors. Also plays a role in mitochondrial death signaling pathway, including the release cytochrome c, leading to apoptosis. The chain is Mitogen-activated protein kinase kinase kinase 9 (Map3k9) from Mus musculus (Mouse).